Consider the following 203-residue polypeptide: Dephospho-CoA kinase (203 aa).

The region spanning 4-203 is the DPCK domain; that stretch reads VIGITGGIAT…EEGYIQSESE (200 aa). 12 to 17 is an ATP binding site; the sequence is ATGKST.

This sequence belongs to the CoaE family.

Its subcellular location is the cytoplasm. The enzyme catalyses 3'-dephospho-CoA + ATP = ADP + CoA + H(+). The protein operates within cofactor biosynthesis; coenzyme A biosynthesis; CoA from (R)-pantothenate: step 5/5. In terms of biological role, catalyzes the phosphorylation of the 3'-hydroxyl group of dephosphocoenzyme A to form coenzyme A. This is Dephospho-CoA kinase from Staphylococcus epidermidis (strain ATCC 35984 / DSM 28319 / BCRC 17069 / CCUG 31568 / BM 3577 / RP62A).